Here is a 505-residue protein sequence, read N- to C-terminus: Lysine--tRNA ligase (505 aa).

Mg(2+)-binding residues include Glu-415 and Glu-422.

Belongs to the class-II aminoacyl-tRNA synthetase family. As to quaternary structure, homodimer. Mg(2+) serves as cofactor.

The protein localises to the cytoplasm. The catalysed reaction is tRNA(Lys) + L-lysine + ATP = L-lysyl-tRNA(Lys) + AMP + diphosphate. The sequence is that of Lysine--tRNA ligase from Enterobacter sp. (strain 638).